Consider the following 603-residue polypeptide: MASAPTSKYNSHSLENESIKRTSRDGVNRDVGETLPRLPGEIRITDKEVIYICPFNGPIKGRVYITNYRLYLRSLETDSALILDVPLGVISRIEKMGGATSRGENSYGLDITCKDLRNLRFALKQEGHSRRDMFEILTRYAFPLAHSLPIFAFLNEEKFNVDGWTVYNPVEEYRRQGLPNHHWRITFINKCYKLCDTYPALLVVPYRASDEDLRRVATFRSRNRIPVLSWIHPENKTVIVRCSQPLVGMSGKRNKEDERYLDVIRETNRQVNKLTIYDARPNVNAVANKATGGGYESDDVYHNAELFFLDIHNIHVMRESLKKVKDIVYPNVEESHWLSSLESTHWLEHIKLVLTGAIQVADRVSSGKSSVVVHCSDGWDRTAQLTSLAMLMLDSFYRSIEGFEILVQKEWISFGHKFASRIGHGDKNHADADRSPIFLQFIDCVWQMSKQFPTAFEFNERFLITILDHLYSCRFGTFLYNCESAREKQKVTERTVSLWSLINSNKDKFKNPFYTKEINRVLYPVASMRHLELWVNYYIRWNPRIKQQQPNPVEQRYMELLALRDEYIKRLDELQLANSAKLSDPSASPSSPSQMMPHVQTHF.

Residues 1 to 13 show a composition bias toward polar residues; sequence MASAPTSKYNSHS. The disordered stretch occupies residues 1–32; the sequence is MASAPTSKYNSHSLENESIKRTSRDGVNRDVG. Phosphoserine occurs at positions 13 and 18. The segment covering 14 to 32 has biased composition (basic and acidic residues); that stretch reads LENESIKRTSRDGVNRDVG. The 69-residue stretch at 29–97 folds into the GRAM domain; it reads RDVGETLPRL…GVISRIEKMG (69 aa). Residues 163-538 enclose the Myotubularin phosphatase domain; sequence GWTVYNPVEE…RHLELWVNYY (376 aa). Positions 288, 313, and 314 each coordinate a 1,2-diacyl-sn-glycero-3-phospho-(1D-myo-inositol-3,5-bisphosphate). Positions 288, 313, and 314 each coordinate a 1,2-diacyl-sn-glycero-3-phospho-(1D-myo-inositol-3-phosphate). Residue C375 is the Phosphocysteine intermediate of the active site. S376, D377, G378, W379, D380, R381, K417, and R421 together coordinate a 1,2-diacyl-sn-glycero-3-phospho-(1D-myo-inositol-3,5-bisphosphate). Residues S376, D377, G378, W379, D380, and R381 each contribute to the a 1,2-diacyl-sn-glycero-3-phospho-(1D-myo-inositol-3-phosphate) site. Residue R421 participates in a 1,2-diacyl-sn-glycero-3-phospho-(1D-myo-inositol-3-phosphate) binding. T495 carries the post-translational modification Phosphothreonine. The tract at residues 580–603 is disordered; the sequence is AKLSDPSASPSSPSQMMPHVQTHF. Residues 583–593 are compositionally biased toward low complexity; the sequence is SDPSASPSSPS. S588 is modified (phosphoserine).

It belongs to the protein-tyrosine phosphatase family. Non-receptor class myotubularin subfamily. As to quaternary structure, heterodimer with MTMR12. Interacts with KMT2A/MLL1 (via SET domain). Interacts with DES in skeletal muscle but not in cardiac muscle. Interacts with SPEG.

It localises to the cytoplasm. It is found in the cell membrane. The protein localises to the cell projection. The protein resides in the filopodium. Its subcellular location is the ruffle. It localises to the late endosome. It is found in the myofibril. The protein localises to the sarcomere. It carries out the reaction a 1,2-diacyl-sn-glycero-3-phospho-(1D-myo-inositol-3-phosphate) + H2O = a 1,2-diacyl-sn-glycero-3-phospho-(1D-myo-inositol) + phosphate. It catalyses the reaction a 1,2-diacyl-sn-glycero-3-phospho-(1D-myo-inositol-3,5-bisphosphate) + H2O = a 1,2-diacyl-sn-glycero-3-phospho-(1D-myo-inositol-5-phosphate) + phosphate. The enzyme catalyses 1,2-dioctanoyl-sn-glycero-3-phospho-(1-D-myo-inositol-3-phosphate) + H2O = 1,2-dioctanoyl-sn-glycero-3-phospho-(1D-myo-inositol) + phosphate. The catalysed reaction is 1,2-dioctanoyl-sn-glycero-3-phospho-(1D-myo-inositol-3,5-bisphosphate) + H2O = 1,2-dioctanoyl-sn-glycero-3-phospho-(1D-myo-inositol-5-phosphate) + phosphate. It carries out the reaction 1,2-dihexadecanoyl-sn-glycero-3-phospho-(1D-myo-inositol-3,5-phosphate) + H2O = 1,2-dihexadecanoyl-sn-glycero-3-phospho-(1D-myo-inositol-5-phosphate) + phosphate. Its activity is regulated as follows. Allosterically activated by phosphatidylinositol 5-phosphate (PI5P). Its function is as follows. Lipid phosphatase which dephosphorylates phosphatidylinositol 3-monophosphate (PI3P) and phosphatidylinositol 3,5-bisphosphate (PI(3,5)P2). Has also been shown to dephosphorylate phosphotyrosine- and phosphoserine-containing peptides. Negatively regulates EGFR degradation through regulation of EGFR trafficking from the late endosome to the lysosome. Plays a role in vacuolar formation and morphology. Regulates desmin intermediate filament assembly and architecture. Plays a role in mitochondrial morphology and positioning. Required for skeletal muscle maintenance but not for myogenesis. In skeletal muscles, stabilizes MTMR12 protein levels. In Bos taurus (Bovine), this protein is Myotubularin.